A 906-amino-acid polypeptide reads, in one-letter code: Protein translocase subunit SecA (906 aa).

ATP is bound by residues Gln89, 107–111 (GEGKT), and Asp502. The interval 868–887 (VPPAQRDPADPRTWGKVSRN) is disordered. Zn(2+) is bound by residues Cys890, Cys892, Cys901, and His902.

Belongs to the SecA family. In terms of assembly, monomer and homodimer. Part of the essential Sec protein translocation apparatus which comprises SecA, SecYEG and auxiliary proteins SecDF-YajC and YidC. Zn(2+) is required as a cofactor.

It localises to the cell inner membrane. The protein resides in the cytoplasm. The enzyme catalyses ATP + H2O + cellular proteinSide 1 = ADP + phosphate + cellular proteinSide 2.. Functionally, part of the Sec protein translocase complex. Interacts with the SecYEG preprotein conducting channel. Has a central role in coupling the hydrolysis of ATP to the transfer of proteins into and across the cell membrane, serving both as a receptor for the preprotein-SecB complex and as an ATP-driven molecular motor driving the stepwise translocation of polypeptide chains across the membrane. The protein is Protein translocase subunit SecA of Brucella abortus (strain S19).